The sequence spans 579 residues: Mitogen-activated protein kinase kinase kinase 7 (579 aa).

Residues 1–300 (MSTASAASSS…FPGADEPLQY (300 aa)) form an interaction with MAPK8IP1 region. Residues 36-291 (IEVEEVVGRG…KIMTHLMRYF (256 aa)) enclose the Protein kinase domain. Residues 42–50 (VGRGAFGVV) and K63 contribute to the ATP site. K72 participates in a covalent cross-link: Glycyl lysine isopeptide (Lys-Gly) (interchain with G-Cter in ubiquitin). Catalysis depends on D156, which acts as the Proton acceptor. K158 is covalently cross-linked (Glycyl lysine isopeptide (Lys-Gly) (interchain with G-Cter in ubiquitin)). Phosphothreonine; by autocatalysis occurs at positions 184 and 187. At S192 the chain carries Phosphoserine; by autocatalysis. A Glycyl lysine isopeptide (Lys-Gly) (interchain with G-Cter in ubiquitin) cross-link involves residue K209. 2 disordered regions span residues 301 to 339 (PCQY…EQVP) and 354 to 391 (KNQA…MSAD). Residues 306-322 (DEGQSNSATSTGSFMDI) show a composition bias toward polar residues. Composition is skewed to low complexity over residues 323 to 334 (TSTNTSNKSDTN) and 361 to 375 (SESG…RGSS). Phosphoserine is present on residues S367, S389, and S412. Residues 416-425 (LTVTGTDPGQ) show a composition bias toward polar residues. A disordered region spans residues 416–466 (LTVTGTDPGQVSSRSSSPSVRMITTSGPTSEKPARSHPWTPDDSTDTNGSD). Residues 426–436 (VSSRSSSPSVR) are compositionally biased toward low complexity. S428 bears the Phosphoserine mark.

This sequence belongs to the protein kinase superfamily. STE Ser/Thr protein kinase family. MAP kinase kinase kinase subfamily. Can form homodimer. Binds both upstream activators and downstream substrates in multimolecular complexes. Interacts with TAB1/MAP3K7IP1, TAB2/MAP3K7IP2 and TAB3/MAP3K7IP3. Identified in the TRIKA2 complex composed of MAP3K7/TAK1, TAB1/MAP3K7IP1 and TAB2/MAP3K7IP2. Interacts with PPM1L and PPM1B/PP2CB. Interaction with PP2A and PPP6C leads to its repressed activity. Interacts with TRAF6 and TAB1/MAP3K7IP1; during IL-1 signaling. Interacts with TAOK1 and TAOK2; interaction with TAOK2 interferes with MAP3K7 interaction with IKKA, thus preventing NF-kappa-B activation. Interacts with DYNC2I2 (via WD domains). Interacts with CYLD and RBCK1. Interacts with TGFBR1; induces MAP3K7/TAK1 activation by TRAF6. Interacts with MAPK8IP1 and SMAD6. Interacts with isoform 1 of VRK2. Interacts with DAB2; the interaction is induced by TGF-beta stimulation and may mediate TGF-beta stimulated JNK activation. Interacts with TRIM5. Part of a complex containing ITCH, NDFIP1 and MAP3K7. Interacts with IFIT5; the interaction synergizes the recruitment of IKK to MAP3K7 and enhances IKK phosphorylation. Interacts with PLEKHM1 (via N- and C-terminus). Found in a complex with SH3RF1, RAC2, MAP2K7/MKK7, MAPK8IP1/JIP1, MAPK8/JNK1 and MAPK9/JNK2. Interacts with SASH1. Interacts with RIPK1. The cofactor is Mg(2+). In terms of processing, association with TAB1/MAP3K7IP1 promotes autophosphorylation at Ser-192 and subsequent activation. Association with TAB2/MAP3K7IP2, itself associated with free unanchored Lys-63 polyubiquitin chain, promotes autophosphorylation and subsequent activation of MAP3K7. Dephosphorylation at Ser-192 by PPM1B/PP2CB and at Thr-187 by PP2A and PPP6C leads to inactivation. Post-translationally, 'Lys-48'-linked polyubiquitination at Lys-72 is induced by TNFalpha, and leads to proteasomal degradation. Undergoes 'Lys-48'-linked polyubiquitination catalyzed by ITCH. 'Lys-63'-linked polyubiquitination at Lys-158 by TRIM8 does not lead to proteasomal degradation but contributes to autophosphorylation and activation. Deubiquitinated by CYLD, a protease that selectively cleaves 'Lys-63'-linked ubiquitin chains. Deubiquitinated by USP19; leading to negative regulation of TNF-alpha- and IL-1beta-triggered NF-kappa-B activation.

The protein resides in the cytoplasm. It localises to the cell membrane. It carries out the reaction L-seryl-[protein] + ATP = O-phospho-L-seryl-[protein] + ADP + H(+). The catalysed reaction is L-threonyl-[protein] + ATP = O-phospho-L-threonyl-[protein] + ADP + H(+). Activated by pro-inflammatory cytokines and in response to physical and chemical stresses, including osmotic stress, oxidative stress, arsenic and ultraviolet light irradiation. Activated by 'Lys-63'-linked polyubiquitination and by autophosphorylation. Association with TAB1/MAP3K7IP1 and TAB2/MAP3K7IP2 promotes activation through autophosphorylation, whereas PPM1B/PP2CB, PP2A and PPP6C dephosphorylation leads to inactivation. Ceramides are also able to activate MAP3K7/TAK1. In terms of biological role, serine/threonine kinase which acts as an essential component of the MAP kinase signal transduction pathway. Plays an important role in the cascades of cellular responses evoked by changes in the environment. Mediates signal transduction of TRAF6, various cytokines including interleukin-1 (IL-1), transforming growth factor-beta (TGFB), TGFB-related factors like BMP2 and BMP4, toll-like receptors (TLR), tumor necrosis factor receptor CD40 and B-cell receptor (BCR). Once activated, acts as an upstream activator of the MKK/JNK signal transduction cascade and the p38 MAPK signal transduction cascade through the phosphorylation and activation of several MAP kinase kinases like MAP2K1/MEK1, MAP2K3/MKK3, MAP2K6/MKK6 and MAP2K7/MKK7. These MAP2Ks in turn activate p38 MAPKs and c-jun N-terminal kinases (JNKs); both p38 MAPK and JNK pathways control the transcription factors activator protein-1 (AP-1). Independently of MAP2Ks and p38 MAPKs, acts as a key activator of NF-kappa-B by promoting activation of the I-kappa-B-kinase (IKK) core complex. Mechanistically, recruited to polyubiquitin chains of RIPK2 and IKBKG/NEMO via TAB2/MAP3K7IP2 and TAB3/MAP3K7IP3, and catalyzes phosphorylation and activation of IKBKB/IKKB component of the IKK complex, leading to NF-kappa-B activation. In osmotic stress signaling, plays a major role in the activation of MAPK8/JNK1, but not that of NF-kappa-B. Promotes TRIM5 capsid-specific restriction activity. Phosphorylates RIPK1 at 'Ser-321' which positively regulates RIPK1 interaction with RIPK3 to promote necroptosis but negatively regulates RIPK1 kinase activity and its interaction with FADD to mediate apoptosis. Phosphorylates STING1 in response to cGAMP-activation, promoting association between STEEP1 and STING1 and STING1 translocation to COPII vesicles. This is Mitogen-activated protein kinase kinase kinase 7 (MAP3K7) from Bos taurus (Bovine).